A 200-amino-acid polypeptide reads, in one-letter code: Protein GrpE (200 aa).

Over residues 1 to 10 (MQEKDSKDVT) the composition is skewed to basic and acidic residues. Positions 1–57 (MQEKDSKDVTMEDEETIASQEEIEVEGNSEESSKEEESNNSEISDENLSEENLKLKD) are disordered. A compositionally biased stretch (acidic residues) spans 11–29 (MEDEETIASQEEIEVEGNS).

The protein belongs to the GrpE family. Homodimer.

The protein resides in the cytoplasm. In terms of biological role, participates actively in the response to hyperosmotic and heat shock by preventing the aggregation of stress-denatured proteins, in association with DnaK and GrpE. It is the nucleotide exchange factor for DnaK and may function as a thermosensor. Unfolded proteins bind initially to DnaJ; upon interaction with the DnaJ-bound protein, DnaK hydrolyzes its bound ATP, resulting in the formation of a stable complex. GrpE releases ADP from DnaK; ATP binding to DnaK triggers the release of the substrate protein, thus completing the reaction cycle. Several rounds of ATP-dependent interactions between DnaJ, DnaK and GrpE are required for fully efficient folding. The sequence is that of Protein GrpE from Clostridium acetobutylicum (strain ATCC 824 / DSM 792 / JCM 1419 / IAM 19013 / LMG 5710 / NBRC 13948 / NRRL B-527 / VKM B-1787 / 2291 / W).